Here is a 725-residue protein sequence, read N- to C-terminus: Ribonuclease R (725 aa).

The RNB domain occupies 264 to 592; the sequence is RQDLTDLAFV…IHRLLWMHLF (329 aa). The S1 motif domain occupies 644-725; that stretch reads GKTFSGFISA…IQKRAILTLI (82 aa).

It belongs to the RNR ribonuclease family. RNase R subfamily.

The protein resides in the cytoplasm. The enzyme catalyses Exonucleolytic cleavage in the 3'- to 5'-direction to yield nucleoside 5'-phosphates.. In terms of biological role, 3'-5' exoribonuclease that releases 5'-nucleoside monophosphates and is involved in maturation of structured RNAs. In Mycoplasma genitalium (strain ATCC 33530 / DSM 19775 / NCTC 10195 / G37) (Mycoplasmoides genitalium), this protein is Ribonuclease R.